Here is a 76-residue protein sequence, read N- to C-terminus: uncharacterized protein (76 aa).

This is an uncharacterized protein from Ornithodoros (relapsing fever ticks).